The chain runs to 648 residues: NADP-dependent malic enzyme, chloroplastic (648 aa).

The N-terminal 61 residues, 1-61, are a transit peptide targeting the chloroplast; it reads MISLNSSFLE…VDSAVRDVNA (61 aa). Catalysis depends on Tyr195, which acts as the Proton donor. Residue Arg248 coordinates NAD(+). Lys266 serves as the catalytic Proton acceptor. Glu339, Asp340, and Asp363 together coordinate a divalent metal cation. Position 363 (Asp363) interacts with NAD(+). 392 to 408 is a binding site for NADP(+); sequence LFLGAGEAGTGIAELIA. Asn504 provides a ligand contact to NAD(+).

The protein belongs to the malic enzymes family. As to quaternary structure, homotetramer. Mg(2+) serves as cofactor. Requires Mn(2+) as cofactor.

It localises to the plastid. The protein localises to the chloroplast. It carries out the reaction (S)-malate + NADP(+) = pyruvate + CO2 + NADPH. The catalysed reaction is oxaloacetate + H(+) = pyruvate + CO2. Its pathway is photosynthesis; C4 acid pathway. The chloroplastic ME isoform decarboxylates malate shuttled from neighboring mesophyll cells. The CO(2) released is then refixed by ribulose-bisphosphate carboxylase. This pathway eliminates the photorespiratory loss of CO(2) that occurs in most plants. The sequence is that of NADP-dependent malic enzyme, chloroplastic (MOD1) from Flaveria trinervia (Clustered yellowtops).